The primary structure comprises 427 residues: Putative F-box protein At3g44060 (427 aa).

The region spanning 1-46 (MDCLPDDLLVQILYLLPTKEAVSTSVLSKRWRTLFTRSDNLDFHDP) is the F-box domain.

The chain is Putative F-box protein At3g44060 from Arabidopsis thaliana (Mouse-ear cress).